Reading from the N-terminus, the 200-residue chain is Anthranilate synthase component 2, pyocyanine specific (200 aa).

A Glutamine amidotransferase type-1 domain is found at 2–195 (RITLLDNFDS…LLWCGALAVR (194 aa)). 56–58 (GPG) is a binding site for L-glutamine. The Nucleophile; for GATase activity role is filled by Cys-83. L-glutamine contacts are provided by residues Gln-87 and 133 to 134 (SL). Residues His-169 and Glu-171 each act as for GATase activity in the active site.

In terms of assembly, heterotetramer consisting of two non-identical subunits: a beta subunit (PhnB) and a large alpha subunit (PhnA).

It carries out the reaction chorismate + L-glutamine = anthranilate + pyruvate + L-glutamate + H(+). The protein operates within secondary metabolite biosynthesis; pyocyanine biosynthesis. Part of a heterotetrameric complex that catalyzes the two-step biosynthesis of anthranilate, a precursor for Pseudomonas quinolone signal (2-heptyl-3-hydroxy-4-quinolone; PQS) production which is required to induce the genes for the biosynthesis of the virulence factor pyocyanine (PCN), a characteristic blue-green phenazine pigment produced by P.aeruginosa. In the first step, the glutamine-binding beta subunit (PhnB) of anthranilate synthase (AS) provides the glutamine amidotransferase activity which generates ammonia as a substrate that, along with chorismate, is used in the second step, catalyzed by the large alpha subunit of AS (PhnA) to produce anthranilate. The chain is Anthranilate synthase component 2, pyocyanine specific from Pseudomonas aeruginosa (strain ATCC 15692 / DSM 22644 / CIP 104116 / JCM 14847 / LMG 12228 / 1C / PRS 101 / PAO1).